A 62-amino-acid chain; its full sequence is Defensin BmKDfsin4 (62 aa).

A signal peptide spans 1–24; the sequence is MKTIVLLFVLALVFCTLEMGIVEA. 3 cysteine pairs are disulfide-bonded: Cys-28–Cys-49, Cys-35–Cys-57, and Cys-39–Cys-59.

It belongs to the invertebrate defensin family. Type 2 subfamily.

It is found in the secreted. In terms of biological role, dual-function peptide with antimicrobial and potassium channel-blocking activities. Shows inhibitory activity against Gram-positive bacteria such as S.aureus, B.subtilis, and M.luteus as well as methicillin-resistant S.aureus (MIC=0.1-20 uM). Does not act on bacteria by disrupting membranes. Also moderately inhibits Kv1.1/KCNA1 (25.2% inhibition at 1 uM), Kv1.2/KCNA2 (30.5% inhibition at 1 uM), and Kv1.3/KCNA3 potassium channels (IC(50)=510.2 nM, 61% inhibition at 1 uM). Inhibits potassium channels by interacting with the pore region. Does not show hemolytic activity. In vitro, dose-dependently decreases the production of Hepatitis B virus (HBV) DNA and HBV viral proteins in both culture medium and cell lysate. This chain is Defensin BmKDfsin4, found in Olivierus martensii (Manchurian scorpion).